We begin with the raw amino-acid sequence, 617 residues long: V-type proton ATPase catalytic subunit A (617 aa).

Position 250-257 (250-257 (GAFGCGKT)) interacts with ATP. S384 carries the phosphoserine; by AMPK modification.

It belongs to the ATPase alpha/beta chains family. V-ATPase is a heteromultimeric enzyme made up of two complexes: the ATP-hydrolytic V1 complex and the proton translocation V0 complex. The V1 complex consists of three catalytic AB heterodimers that form a heterohexamer, three peripheral stalks each consisting of EG heterodimers, one central rotor including subunits D and F, and the regulatory subunits C and H. The proton translocation complex V0 consists of the proton transport subunit a, a ring of proteolipid subunits c9c'', rotary subunit d, subunits e and f, and the accessory subunits ATP6AP1/Ac45 and ATP6AP2/PRR. Interacts with the V0 complex V-ATPase subunit a4 ATP6V0A4. Interacts with WFS1. Interacts with alpha-crystallin B chain/CRYAB and with MTOR, forming a ternary complex. Phosphorylation at Ser-384 by AMPK down-regulates its enzyme activity.

It localises to the cytoplasm. Its subcellular location is the cytosol. The protein localises to the cytoplasmic vesicle. The protein resides in the secretory vesicle. It is found in the clathrin-coated vesicle membrane. It localises to the lysosome. It carries out the reaction ATP + H2O + 4 H(+)(in) = ADP + phosphate + 5 H(+)(out). ATP hydrolysis occurs at the interface between the nucleotide-binding domains of subunits A and B. ATP hydrolysis triggers a conformational change in the subunits D and F, which induces a shift of subunit d. The c-ring is subsequently rotated and results in a continuous proton translocation across the membrane. Catalytic subunit of the V1 complex of vacuolar(H+)-ATPase (V-ATPase), a multisubunit enzyme composed of a peripheral complex (V1) that hydrolyzes ATP and a membrane integral complex (V0) that translocates protons. V-ATPase is responsible for acidifying and maintaining the pH of intracellular compartments and in some cell types, is targeted to the plasma membrane, where it is responsible for acidifying the extracellular environment. In aerobic conditions, involved in intracellular iron homeostasis, thus triggering the activity of Fe(2+) prolyl hydroxylase (PHD) enzymes, and leading to HIF1A hydroxylation and subsequent proteasomal degradation. May play a role in neurite development and synaptic connectivity. In Mus musculus (Mouse), this protein is V-type proton ATPase catalytic subunit A (Atp6v1a).